Consider the following 114-residue polypeptide: Large ribosomal subunit protein bL19 (114 aa).

This sequence belongs to the bacterial ribosomal protein bL19 family.

Its function is as follows. This protein is located at the 30S-50S ribosomal subunit interface and may play a role in the structure and function of the aminoacyl-tRNA binding site. This is Large ribosomal subunit protein bL19 from Lysinibacillus sphaericus (strain C3-41).